Here is a 623-residue protein sequence, read N- to C-terminus: Cell pattern formation-associated protein stuA (623 aa).

Polar residues predominate over residues 13 to 31; that stretch reads QHMQSAGQPQQPQTVTSGP. Residues 13 to 111 form a disordered region; it reads QHMQSAGQPQ…DTTGQHPPPG (99 aa). One can recognise an HTH APSES-type domain in the interval 115 to 221; that stretch reads RVTATLWEDE…HNIGALLYHP (107 aa). A DNA-binding region (H-T-H motif) is located at residues 149–170; sequence GTKLLNVAGMTRGRRDGILKSE. Disordered regions lie at residues 232 to 270 and 332 to 623; these read AAAERRKQDQGQMRTPPAGLPSIQHQPHNSMALPGPQSS and ARSM…PRQR. Polar residues predominate over residues 335–374; that stretch reads MPTTPATTPPGSMQPYGSAQSFDGSRQQMYNAPSQQSPYP. Over residues 396–408 the composition is skewed to low complexity; it reads GPPSSRPSGSAPS. Basic and acidic residues predominate over residues 423 to 446; the sequence is EHGHQSHAGEEDGEHEQHDAEYTH. Over residues 542–553 the composition is skewed to low complexity; the sequence is APPADMANPMPN. The tract at residues 569-594 is nuclear localization domain; the sequence is KRGREGDDDLSRPVGDVPGMDMKRRK. Over residues 570-579 the composition is skewed to basic and acidic residues; it reads RGREGDDDLS.

This sequence belongs to the EFG1/PHD1/stuA family.

Its subcellular location is the nucleus. Its function is as follows. Transcription factor that regulates asexual reproduction. Binds the StuA-response elements (StRE) with the consensus sequence 5'-(A/T)CGCG(T/A)N(A/C)-3' at the promoters of target genes. Controls conidiation by positively regulating the expression of brlA and abaA. Positively regulates the cephalosporin biosynthesis gene cluster. Also involved hyphal fragmentation and cell wall integrity. This is Cell pattern formation-associated protein stuA from Hapsidospora chrysogenum (strain ATCC 11550 / CBS 779.69 / DSM 880 / IAM 14645 / JCM 23072 / IMI 49137) (Acremonium chrysogenum).